A 565-amino-acid chain; its full sequence is Ubiquitin carboxyl-terminal hydrolase 21 (565 aa).

2 stretches are compositionally biased toward basic and acidic residues: residues 1-14 and 58-70; these read MPQA…RTRE and PPDE…DLGR. The disordered stretch occupies residues 1 to 128; that stretch reads MPQASEHRLG…LRPMGIALGG (128 aa). Residues 71-81 are compositionally biased toward low complexity; that stretch reads GRTSGSRPRGP. The span at 104-116 shows a compositional bias: polar residues; that stretch reads SRTNLTRSKSVSS. Residues 134–152 carry the Nuclear export signal motif; the sequence is ELGAALSRLALRPEPPTLR. The 347-residue stretch at 212 to 558 folds into the USP domain; it reads VGLRNLGNTC…EGYVLFYQLM (347 aa). Catalysis depends on Cys-221, which acts as the Nucleophile. Residues 324–347 form a disordered region; that stretch reads APPILASGPVPSPPRRGGALHEEP. Positions 384, 387, 437, and 440 each coordinate Zn(2+). His-518 functions as the Proton acceptor in the catalytic mechanism.

It belongs to the peptidase C19 family. USP21 subfamily. As to quaternary structure, interacts with BEND3.

The protein localises to the cytoplasm. The protein resides in the nucleus. The enzyme catalyses Thiol-dependent hydrolysis of ester, thioester, amide, peptide and isopeptide bonds formed by the C-terminal Gly of ubiquitin (a 76-residue protein attached to proteins as an intracellular targeting signal).. Its function is as follows. Deubiquitinates histone H2A, a specific tag for epigenetic transcriptional repression, thereby acting as a coactivator. Deubiquitination of histone H2A releaves the repression of di- and trimethylation of histone H3 at 'Lys-4', resulting in regulation of transcriptional initiation. Regulates gene expression via histone H2A deubiquitination. Deubiquitinates BAZ2A/TIP5 leading to its stabilization. Also capable of removing NEDD8 from NEDD8 conjugates but has no effect on Sentrin-1 conjugates. Also acts as a negative regulator of the ribosome quality control (RQC) by mediating deubiquitination of 40S ribosomal proteins RPS10/eS10 and RPS20/uS10, thereby antagonizing ZNF598-mediated 40S ubiquitination. This is Ubiquitin carboxyl-terminal hydrolase 21 (Usp21) from Rattus norvegicus (Rat).